The following is a 707-amino-acid chain: Tubulin polyglutamylase ttll-11 (707 aa).

The TTL domain occupies 124–488; sequence RFTIDTSRAK…PLVRDTLLLV (365 aa). ATP is bound by residues 279–282, Lys293, and Asp295; that span reads QEYV. The interval 675 to 707 is disordered; it reads RNRSGTNGRKQNFTDDNNNPNSFAHLPKINERL. Polar residues predominate over residues 677-696; that stretch reads RSGTNGRKQNFTDDNNNPNS.

The protein belongs to the tubulin--tyrosine ligase family. Expressed in amphid sensory neurons. Weakly expressed in body wall muscles. Isoform a: Specifically expressed in ciliated sensory neurons in the head, including the IL1s, OLQ, head CEP, and amphid neurons. In the male tail, expressed in HOA, RnA, and phasmid neurons. Isoform b: Specifically expressed in male and hermaphrodite IL2 ciliated sensory neurons, and in male-specific CEM, HOB and RnB ciliated sensory neurons.

It is found in the cell projection. It localises to the axon. Its subcellular location is the perikaryon. The protein localises to the dendrite. The protein resides in the cilium. It is found in the extracellular vesicle. It carries out the reaction L-glutamyl-[protein] + L-glutamate + ATP = gamma-L-glutamyl-L-glutamyl-[protein] + ADP + phosphate + H(+). Its function is as follows. Polyglutamylase which preferentially modifies tubulin. Involved in the side-chain initiation step of the polyglutamylation reaction. By controlling tubulin glutamylation, regulates ciliary specialization and motor-based transport. Promotes the formation of A and B tubule singlets by splaying microtubule doublets in cilia. Together with ttll-4 and 5, required for male mating. In terms of biological role, specifically promotes tubulin glutamylation in a subset of ciliated neurons including amphid, phasmid, CEP and RnA neurons. Specifically promotes tubulin glutamylation in male ciliated CEM, HOB and RnB neurons that release bioactive extracellular vesicles. Regulates the localization of TRP channel pdk-2 in male CEM, HOB and RnB neurons. Regulates the environmental release of bioactive extracellular vesicles in cilia. This is Tubulin polyglutamylase ttll-11 from Caenorhabditis elegans.